Here is a 175-residue protein sequence, read N- to C-terminus: Sec-independent protein translocase protein TatB (175 aa).

A helical membrane pass occupies residues 1–21; sequence MLDLGLSKMALIGVVALVVLG. Low complexity predominate over residues 94–115; it reads SAVSPGGSAAADAPDGPSAASG. Disordered stretches follow at residues 94–118 and 153–175; these read SAVS…GEPS and VQSG…ARFL. Basic residues predominate over residues 160 to 175; sequence VARHRPASLRRPARFL.

Belongs to the TatB family. In terms of assembly, the Tat system comprises two distinct complexes: a TatABC complex, containing multiple copies of TatA, TatB and TatC subunits, and a separate TatA complex, containing only TatA subunits. Substrates initially bind to the TatABC complex, which probably triggers association of the separate TatA complex to form the active translocon.

Its subcellular location is the cell inner membrane. In terms of biological role, part of the twin-arginine translocation (Tat) system that transports large folded proteins containing a characteristic twin-arginine motif in their signal peptide across membranes. Together with TatC, TatB is part of a receptor directly interacting with Tat signal peptides. TatB may form an oligomeric binding site that transiently accommodates folded Tat precursor proteins before their translocation. The polypeptide is Sec-independent protein translocase protein TatB (Burkholderia pseudomallei (strain 1106a)).